The following is a 227-amino-acid chain: Phosphoribosylformylglycinamidine synthase subunit PurQ (227 aa).

Residues 3–225 enclose the Glutamine amidotransferase type-1 domain; it reads FAVIVLPGSN…VKNWRETHVT (223 aa). Cys86 acts as the Nucleophile in catalysis. Catalysis depends on residues His194 and Glu196.

Part of the FGAM synthase complex composed of 1 PurL, 1 PurQ and 2 PurS subunits.

Its subcellular location is the cytoplasm. The catalysed reaction is N(2)-formyl-N(1)-(5-phospho-beta-D-ribosyl)glycinamide + L-glutamine + ATP + H2O = 2-formamido-N(1)-(5-O-phospho-beta-D-ribosyl)acetamidine + L-glutamate + ADP + phosphate + H(+). The enzyme catalyses L-glutamine + H2O = L-glutamate + NH4(+). Its pathway is purine metabolism; IMP biosynthesis via de novo pathway; 5-amino-1-(5-phospho-D-ribosyl)imidazole from N(2)-formyl-N(1)-(5-phospho-D-ribosyl)glycinamide: step 1/2. Its function is as follows. Part of the phosphoribosylformylglycinamidine synthase complex involved in the purines biosynthetic pathway. Catalyzes the ATP-dependent conversion of formylglycinamide ribonucleotide (FGAR) and glutamine to yield formylglycinamidine ribonucleotide (FGAM) and glutamate. The FGAM synthase complex is composed of three subunits. PurQ produces an ammonia molecule by converting glutamine to glutamate. PurL transfers the ammonia molecule to FGAR to form FGAM in an ATP-dependent manner. PurS interacts with PurQ and PurL and is thought to assist in the transfer of the ammonia molecule from PurQ to PurL. The chain is Phosphoribosylformylglycinamidine synthase subunit PurQ from Bacillus subtilis (strain 168).